The chain runs to 471 residues: Citrate synthase, mitochondrial (471 aa).

Residues His-309, His-355, and Asp-409 contribute to the active site.

The protein belongs to the citrate synthase family. In terms of assembly, homodimer. Ubiquitous.

The protein resides in the mitochondrion matrix. It catalyses the reaction oxaloacetate + acetyl-CoA + H2O = citrate + CoA + H(+). It functions in the pathway carbohydrate metabolism; tricarboxylic acid cycle; isocitrate from oxaloacetate: step 1/2. In Solanum tuberosum (Potato), this protein is Citrate synthase, mitochondrial.